The following is a 402-amino-acid chain: Pyridinium-3,5-bisthiocarboxylic acid mononucleotide nickel insertion protein (402 aa).

This sequence belongs to the LarC family.

It carries out the reaction Ni(II)-pyridinium-3,5-bisthiocarboxylate mononucleotide = pyridinium-3,5-bisthiocarboxylate mononucleotide + Ni(2+). In terms of biological role, involved in the biosynthesis of a nickel-pincer cofactor ((SCS)Ni(II) pincer complex). Binds Ni(2+), and functions in nickel delivery to pyridinium-3,5-bisthiocarboxylic acid mononucleotide (P2TMN), to form the mature cofactor. Is thus probably required for the activation of nickel-pincer cofactor-dependent enzymes. This is Pyridinium-3,5-bisthiocarboxylic acid mononucleotide nickel insertion protein from Desulfitobacterium hafniense (strain DSM 10664 / DCB-2).